Here is a 422-residue protein sequence, read N- to C-terminus: Acylglycerol kinase, mitochondrial (422 aa).

At Lys-6 the chain carries N6-acetyllysine. The hydrophobic stretch occupies residues 15 to 31; that stretch reads TTAGLCLLTWGGHWLYG. The 142-residue stretch at 58-199 folds into the DAGKc domain; the sequence is AQVKKATVFL…LDVLQIKGEK (142 aa). The segment at 249–271 is disordered; that stretch reads QASISYTGPTERPPSEPEETPVQ.

This sequence belongs to the AGK family. As to quaternary structure, component of the TIM22 complex, which core is composed of TIMM22, associated with TIMM10 (TIMM10A and/or TIMM10B), TIMM9, AGK and TIMM29. Interacts with SMIM26. Mg(2+) serves as cofactor.

Its subcellular location is the mitochondrion inner membrane. It is found in the mitochondrion intermembrane space. The catalysed reaction is a monoacylglycerol + ATP = a monoacyl-sn-glycero-3-phosphate + ADP + H(+). It catalyses the reaction a 1,2-diacyl-sn-glycerol + ATP = a 1,2-diacyl-sn-glycero-3-phosphate + ADP + H(+). It carries out the reaction an N-acylsphing-4-enine + ATP = an N-acylsphing-4-enine 1-phosphate + ADP + H(+). The enzyme catalyses 1-(9Z-octadecenoyl)-sn-glycerol + ATP = 1-(9Z-octadecenoyl)-sn-glycero-3-phosphate + ADP + H(+). The catalysed reaction is 1,2-di-(9Z-octadecenoyl)-sn-glycerol + ATP = 1,2-di-(9Z-octadecenoyl)-sn-glycero-3-phosphate + ADP + H(+). It catalyses the reaction a 1-acyl-sn-glycerol + ATP = a 1-acyl-sn-glycero-3-phosphate + ADP + H(+). It carries out the reaction 1-hexadecanoyl-sn-glycerol + ATP = 1-hexadecanoyl-sn-glycero-3-phosphate + ADP + H(+). The enzyme catalyses a 2-acylglycerol + ATP = a 2-acyl-sn-glycerol 3-phosphate + ADP + H(+). The catalysed reaction is 2-(5Z,8Z,11Z,14Z-eicosatetraenoyl)-glycerol + ATP = 2-(5Z,8Z,11Z,14Z-eicosatetraenoyl)-sn-glycero-3-phosphate + ADP + H(+). It catalyses the reaction 1-(5Z,8Z,11Z,14Z-eicosatetraenoyl)-sn-glycerol + ATP = 1-(5Z,8Z,11Z,14Z-eicosatetraenoyl)-sn-glycero-3-phosphate + ADP + H(+). It carries out the reaction N-(hexanoyl)sphing-4-enine + ATP = N-hexanoylsphing-4-enine 1-phosphate + ADP + H(+). It participates in lipid metabolism; glycerolipid metabolism. In terms of biological role, lipid kinase that can phosphorylate both monoacylglycerol and diacylglycerol to form lysophosphatidic acid (LPA) and phosphatidic acid (PA), respectively. Phosphorylates ceramide but not sphingosine. Phosphorylates 1,2-dioleoylglycerol more rapidly than 2,3-dioleoylglycerol. Independently of its lipid kinase activity, acts as a component of the TIM22 complex. The TIM22 complex mediates the import and insertion of multi-pass transmembrane proteins into the mitochondrial inner membrane by forming a twin-pore translocase that uses the membrane potential as the external driving force. In the TIM22 complex, required for the import of a subset of metabolite carriers into mitochondria, such as ANT1/SLC25A4 and SLC25A24, while it is not required for the import of TIMM23. Overexpression increases the formation and secretion of LPA, resulting in transactivation of EGFR and activation of the downstream MAPK signaling pathway, leading to increased cell growth. The chain is Acylglycerol kinase, mitochondrial from Pongo abelii (Sumatran orangutan).